Here is a 627-residue protein sequence, read N- to C-terminus: uncharacterized protein (627 aa).

Disordered regions lie at residues 441-466 (EAVP…QGEN) and 608-627 (DLRG…TEDR). Positions 615 to 627 (DYERGKGESTEDR) are enriched in basic and acidic residues.

This is an uncharacterized protein from Homo sapiens (Human).